Reading from the N-terminus, the 457-residue chain is uncharacterized protein (457 aa).

Residues 1 to 18 form the signal peptide; the sequence is MKLLISLLWSIFFSIVYS. Topologically, residues 19–173 are lumenal; it reads EKTLLNFKHY…GGLPASQFPR (155 aa). The chain crosses the membrane as a helical span at residues 174–194; that stretch reads MPISGGITIAYSVILALWMFF. At 195 to 207 the chain is on the cytoplasmic side; sequence RFQYKHSIVTVQK. A helical transmembrane segment spans residues 208 to 228; that stretch reads AIMFLLIFSCAQQAVTSIVLD. Residues 229–243 lie on the Lumenal side of the membrane; that stretch reads TENLRNRGNFTWLGE. The helical transmembrane segment at 244-264 threads the bilayer; the sequence is TLVSILFACQLVLDLALLLIL. Over 265-284 the chain is Cytoplasmic; that stretch reads SWGYTRYSTNMRDRLFTEAK. Residues 285–305 form a helical membrane-spanning segment; that stretch reads IPLIICFFALFVVRFFAITIQ. At 306 to 314 the chain is on the lumenal side; that stretch reads SIHLGLWFC. Residues 315–335 form a helical membrane-spanning segment; sequence FFFLTACISALYILFGAFVAL. Over 336–358 the chain is Cytoplasmic; the sequence is PSTLRALVEQRYYTLHSIYKIFR. A helical membrane pass occupies residues 359–379; that stretch reads IMVLCGVVTIFSFSLVALIFC. The Lumenal segment spans residues 380–457; sequence SNTNNNSTNK…EEDIRADKSK (78 aa).

It belongs to the LU7TM family.

Its subcellular location is the endoplasmic reticulum membrane. This is an uncharacterized protein from Schizosaccharomyces pombe (strain 972 / ATCC 24843) (Fission yeast).